The primary structure comprises 587 residues: Cryptochrome-1 (587 aa).

Positions 3-132 (VNAVHWFRKG…EVIVRISHTL (130 aa)) constitute a Photolyase/cryptochrome alpha/beta domain. Residue Lys11 forms a Glycyl lysine isopeptide (Lys-Gly) (interchain with G-Cter in ubiquitin) linkage. Positions 50-54 (NRWRF) match the LIR 1 motif. Residue Ser71 is modified to Phosphoserine; by AMPK. Residues 82–87 (DVFPRL) carry the LIR 2 motif. Lys107 participates in a covalent cross-link: Glycyl lysine isopeptide (Lys-Gly) (interchain with G-Cter in ubiquitin). Positions 151–156 (KRFQTL) match the LIR 3 motif. A Glycyl lysine isopeptide (Lys-Gly) (interchain with G-Cter in ubiquitin) cross-link involves residue Lys159. At Ser247 the chain carries Phosphoserine; by MAPK. An FAD-binding site is contributed by Ser252. 2 consecutive short sequence motifs (LIR) follow at residues 255-260 (LRFGCL) and 271-276 (DLYKKV). Residue Ser280 is modified to Phosphoserine; by AMPK. The short motif at 285 to 290 (SLYGQL) is the LIR 6 element. FAD is bound at residue Gln289. Residue Lys329 forms a Glycyl lysine isopeptide (Lys-Gly) (interchain with G-Cter in ubiquitin) linkage. An LIR 7 motif is present at residues 335-339 (TGFPW). An FAD-binding site is contributed by His355. Residues 371-470 (WISWEEGMKV…LIGVNYPKPM (100 aa)) are required for inhibition of CLOCK-BMAL1-mediated transcription. The short motif at 379–384 (KVFEEL) is the LIR 8 element. 387–389 (DAD) is an FAD binding site. 3 short sequence motifs (LIR) span residues 395 to 400 (GSWMWL), 411 to 416 (HCYCPV), and 430 to 435 (RRYLPV). The interval 471–493 (VNHAEASRLNIERMKQIYQQLSR) is interaction with TIMELESS. A Glycyl lysine isopeptide (Lys-Gly) (interchain with G-Cter in ubiquitin) cross-link involves residue Lys485. 2 consecutive short sequence motifs (LIR) follow at residues 486-491 (QIYQQL) and 492-497 (SRYRGL). Residues 554–587 (GSSSMGHGLSNGKRPSQEEDTQSIGPKVQRQSTN) form a disordered region. Phosphoserine is present on Ser569.

The protein belongs to the DNA photolyase class-1 family. Component of the circadian core oscillator, which includes the CRY proteins, CLOCK or NPAS2, BMAL1 or BMAL2, CSNK1D and/or CSNK1E, TIMELESS, and the PER proteins. Interacts directly with TIMELESS. Interacts directly with PER1, PER2 and PER3; interaction with PER2 inhibits its ubiquitination and vice versa. Interacts with FBXL21. Interacts with FBXL3. Interacts with CLOCK-BMAL1 independently of PER2 and DNA. Interacts with HDAC1, HDAC2 and SIN3B. Interacts with nuclear receptors AR, NR1D1, NR3C1/GR, RORA and RORC; the interaction with at least NR3C1/GR is ligand dependent. Interacts with PRKDC. Interacts with the G protein subunit alpha GNAS; the interaction may block GPCR-mediated regulation of cAMP concentrations. Interacts with PRMT5. Interacts with EZH2. Interacts with MYBBP1A, DOCK7, HNRNPU, RPL7A, RPL8 and RPS3. Interacts with PPP5C (via TPR repeats). Interacts with MAP1LC3B. Interacts with CLOCK. Interacts with BMAL1. Interacts weakly with HDAC3; this interaction is enhanced in the presence of FBXL3. Interacts with TRIM28, KCTD5 and DDB1 Interacts with HNF4A. Interacts with PSMD2 in a KDM8-dependent manner. Interacts with KDM8 in a FBXL3-dependent manner. Interacts with PPARG in a ligand-dependent manner. Interacts with PPARD (via domain NR LBD) and NR1I2 (via domain NR LBD) in a ligand-dependent manner. Interacts with PPARA, NR1I3 and VDR. FAD is required as a cofactor. Requires (6R)-5,10-methylene-5,6,7,8-tetrahydrofolate as cofactor. Post-translationally, phosphorylation on Ser-247 by MAPK is important for the inhibition of CLOCK-BMAL1-mediated transcriptional activity. Phosphorylation by CSNK1E requires interaction with PER1 or PER2. Phosphorylation at Ser-71 and Ser-280 by AMPK decreases protein stability. Phosphorylation at Ser-569 exhibits a robust circadian rhythm with a peak at CT8, increases protein stability, prevents SCF(FBXL3)-mediated degradation and is antagonized by interaction with PRKDC. Ubiquitinated by the SCF(FBXL3) and SCF(FBXL21) complexes, regulating the balance between degradation and stabilization. The SCF(FBXL3) complex is mainly nuclear and mediates ubiquitination and subsequent degradation of CRY1. In contrast, cytoplasmic SCF(FBXL21) complex-mediated ubiquitination leads to stabilize CRY1 and counteract the activity of the SCF(FBXL3) complex. The SCF(FBXL3) and SCF(FBXL21) complexes probably mediate ubiquitination at different Lys residues. Ubiquitination at Lys-11 and Lys-107 are specifically ubiquitinated by the SCF(FBXL21) complex but not by the SCF(FBXL3) complex. Ubiquitination may be inhibited by PER2. Deubiquitinated by USP7. In terms of processing, undergoes autophagy-mediated degradation in the liver in a time-dependent manner. Autophagic degradation of CRY1 (an inhibitor of gluconeogenesis) occurs during periods of reduced feeding allowing induction of gluconeogenesis and maintenance of blood glucose levels. In terms of tissue distribution, expressed in all tissues tested including spleen, liver, skeletal muscle, kidney, brain, intestine, eye, harderian gland, liver and heart. Highest levels in the eye, brain, kidney and harderian gland. In the brain, especially located to the suprachiasma nucleus (SCN).

Its subcellular location is the cytoplasm. The protein localises to the nucleus. Functionally, transcriptional repressor which forms a core component of the circadian clock. The circadian clock, an internal time-keeping system, regulates various physiological processes through the generation of approximately 24 hour circadian rhythms in gene expression, which are translated into rhythms in metabolism and behavior. It is derived from the Latin roots 'circa' (about) and 'diem' (day) and acts as an important regulator of a wide array of physiological functions including metabolism, sleep, body temperature, blood pressure, endocrine, immune, cardiovascular, and renal function. Consists of two major components: the central clock, residing in the suprachiasmatic nucleus (SCN) of the brain, and the peripheral clocks that are present in nearly every tissue and organ system. Both the central and peripheral clocks can be reset by environmental cues, also known as Zeitgebers (German for 'timegivers'). The predominant Zeitgeber for the central clock is light, which is sensed by retina and signals directly to the SCN. The central clock entrains the peripheral clocks through neuronal and hormonal signals, body temperature and feeding-related cues, aligning all clocks with the external light/dark cycle. Circadian rhythms allow an organism to achieve temporal homeostasis with its environment at the molecular level by regulating gene expression to create a peak of protein expression once every 24 hours to control when a particular physiological process is most active with respect to the solar day. Transcription and translation of core clock components (CLOCK, NPAS2, BMAL1, BMAL2, PER1, PER2, PER3, CRY1 and CRY2) plays a critical role in rhythm generation, whereas delays imposed by post-translational modifications (PTMs) are important for determining the period (tau) of the rhythms (tau refers to the period of a rhythm and is the length, in time, of one complete cycle). A diurnal rhythm is synchronized with the day/night cycle, while the ultradian and infradian rhythms have a period shorter and longer than 24 hours, respectively. Disruptions in the circadian rhythms contribute to the pathology of cardiovascular diseases, cancer, metabolic syndromes and aging. A transcription/translation feedback loop (TTFL) forms the core of the molecular circadian clock mechanism. Transcription factors, CLOCK or NPAS2 and BMAL1 or BMAL2, form the positive limb of the feedback loop, act in the form of a heterodimer and activate the transcription of core clock genes and clock-controlled genes (involved in key metabolic processes), harboring E-box elements (5'-CACGTG-3') within their promoters. The core clock genes: PER1/2/3 and CRY1/2 which are transcriptional repressors form the negative limb of the feedback loop and interact with the CLOCK|NPAS2-BMAL1|BMAL2 heterodimer inhibiting its activity and thereby negatively regulating their own expression. This heterodimer also activates nuclear receptors NR1D1/2 and RORA/B/G, which form a second feedback loop and which activate and repress BMAL1 transcription, respectively. CRY1 and CRY2 have redundant functions but also differential and selective contributions at least in defining the pace of the SCN circadian clock and its circadian transcriptional outputs. More potent transcriptional repressor in cerebellum and liver than CRY2, though more effective in lengthening the period of the SCN oscillator. On its side, CRY2 seems to play a critical role in tuning SCN circadian period by opposing the action of CRY1. With CRY2, is dispensable for circadian rhythm generation but necessary for the development of intercellular networks for rhythm synchrony. Capable of translocating circadian clock core proteins such as PER proteins to the nucleus. Interacts with CLOCK-BMAL1 independently of PER proteins and is found at CLOCK-BMAL1-bound sites, suggesting that CRY may act as a molecular gatekeeper to maintain CLOCK-BMAL1 in a poised and repressed state until the proper time for transcriptional activation. Represses the CLOCK-BMAL1 induced transcription of BHLHE40/DEC1, ATF4, MTA1, KLF10 and NAMPT. May repress circadian target genes expression in collaboration with HDAC1 and HDAC2 through histone deacetylation. Mediates the clock-control activation of ATR and modulates ATR-mediated DNA damage checkpoint. In liver, mediates circadian regulation of cAMP signaling and gluconeogenesis by binding to membrane-coupled G proteins and blocking glucagon-mediated increases in intracellular cAMP concentrations and CREB1 phosphorylation. Inhibits hepatic gluconeogenesis by decreasing nuclear FOXO1 levels that down-regulates gluconeogenic gene expression. Besides its role in the maintenance of the circadian clock, is also involved in the regulation of other processes. Represses glucocorticoid receptor NR3C1/GR-induced transcriptional activity by binding to glucocorticoid response elements (GREs). Plays a key role in glucose and lipid metabolism modulation, in part, through the transcriptional regulation of genes involved in these pathways, such as LEP or ACSL4. Represses PPARD and its target genes in the skeletal muscle and limits exercise capacity. Plays an essential role in the generation of circadian rhythms in the retina. Represses the transcriptional activity of NR1I2. The sequence is that of Cryptochrome-1 (CRY1) from Spalax judaei (Judean Mountains blind mole rat).